A 461-amino-acid chain; its full sequence is Argininosuccinate lyase (461 aa).

The protein belongs to the lyase 1 family. Argininosuccinate lyase subfamily.

It is found in the cytoplasm. The enzyme catalyses 2-(N(omega)-L-arginino)succinate = fumarate + L-arginine. Its pathway is amino-acid biosynthesis; L-arginine biosynthesis; L-arginine from L-ornithine and carbamoyl phosphate: step 3/3. The protein is Argininosuccinate lyase of Desulfitobacterium hafniense (strain DSM 10664 / DCB-2).